A 212-amino-acid polypeptide reads, in one-letter code: Metalloproteinase inhibitor 3 (212 aa).

The signal sequence occupies residues methionine 1 to alanine 24. A Zn(2+)-binding site is contributed by cysteine 25. Involved in metalloproteinase-binding stretches follow at residues cysteine 25–valine 28 and glutamate 89–serine 90. Intrachain disulfides connect cysteine 25–cysteine 92, cysteine 27–cysteine 119, cysteine 37–cysteine 144, cysteine 146–cysteine 193, cysteine 151–cysteine 156, and cysteine 164–cysteine 185. In terms of domain architecture, NTR spans cysteine 25–cysteine 144.

The protein belongs to the protease inhibitor I35 (TIMP) family.

It localises to the secreted. It is found in the extracellular space. The protein resides in the extracellular matrix. Its function is as follows. Complexes with metalloproteinases (such as collagenases) and irreversibly inactivates them by binding to their catalytic zinc cofactor. May form part of a tissue-specific acute response to remodeling stimuli. The chain is Metalloproteinase inhibitor 3 (TIMP3) from Gallus gallus (Chicken).